A 217-amino-acid chain; its full sequence is Vesicle-associated membrane protein 723 (217 aa).

Topologically, residues 1–192 (MAQQSLFYSF…KWFQNMKIKL (192 aa)) are cytoplasmic. One can recognise a Longin domain in the interval 10–114 (FIARGTVILV…SLNKEFGSNL (105 aa)). The v-SNARE coiled-coil homology domain maps to 130 to 186 (NLAKAKAQVSEVKSLMMENIEKVLARGVICEMLGSSESQPQAFYIKRTQMKRKKWFQ). Residues 193-213 (IVLAIIIALILIIILSVCGGF) form a helical; Anchor for type IV membrane protein membrane-spanning segment. Over 214-217 (NCGK) the chain is Vesicular.

The protein belongs to the synaptobrevin family. In terms of tissue distribution, highly expressed in stems and roots. Detected in flowers and leaves.

The protein localises to the endoplasmic reticulum membrane. In terms of biological role, involved in the targeting and/or fusion of transport vesicles to their target membrane. The sequence is that of Vesicle-associated membrane protein 723 from Arabidopsis thaliana (Mouse-ear cress).